Consider the following 351-residue polypeptide: Short-chain dehydrogenase sdnK (351 aa).

Positions 46, 66, 98, 224, 228, and 268 each coordinate NADP(+). Y224 acts as the Proton donor in catalysis. K228 serves as the catalytic Lowers pKa of active site Tyr.

This sequence belongs to the short-chain dehydrogenases/reductases (SDR) family.

The protein operates within antibiotic biosynthesis. Functionally, short-chain dehydrogenase; part of the gene cluster that mediates the biosynthesis of sordarin and hypoxysordarin, glycoside antibiotics with a unique tetracyclic diterpene aglycone structure. First, the geranylgeranyl diphosphate synthase sdnC constructs GGDP from farnesyl diphosphate and isopentenyl diphosphate. The diterpene cyclase sdnA then catalyzes the cyclization of GGDP to afford cycloaraneosene. Cycloaraneosene is then hydroxylated four times by the putative cytochrome P450 monooxygenases sdnB, sdnE, sdnF and sdnH to give a hydroxylated cycloaraneosene derivative such as cycloaraneosene-8,9,13,19-tetraol. Although the order of the hydroxylations is unclear, at least C8, C9 and C13 of the cycloaraneosene skeleton are hydroxylated before the sordaricin formation. Dehydration of the 13-hydroxy group of the hydroxylated cycloaraneosene derivative might be catalyzed by an unassigned hypothetical protein such as sdnG and sdnP to construct the cyclopentadiene moiety. The FAD-dependent oxidoreductase sdnN is proposed to catalyze the oxidation at C9 of the hydroxylated cycloaraneosene derivative and also catalyze the Baeyer-Villiger oxidation to give the lactone intermediate. The presumed lactone intermediate would be hydrolyzed to give an acrolein moiety and a carboxylate moiety. Then, [4+2]cycloaddition would occur between the acrolein moiety and the cyclopentadiene moiety to give sordaricin. SdnN might also be involved in the [4+2]cycloaddition after the hypothesized oxidation to accommodate the oxidized product and prompt the [4+2]cycloaddition. GDP-6-deoxy-D-altrose may be biosynthesized from GDP-D-mannose by the putative GDP-mannose-4,6-dehydratase sdnI and the short-chain dehydrogenase sdnK. The glycosyltransferase sdnJ catalyzes the attachment of 6-deoxy-D-altrose onto the 19-hydroxy group of sordaricin to give 4'-O-demethylsordarin. The methyltransferase sdnD would complete the biosynthesis of sordarin. Sordarin can be further modified into hypoxysordarin. The unique acyl chain at the 3'-hydroxy group of hypoxysordarin would be constructed by an iterative type I PKS sdnO and the trans-acting polyketide methyltransferase sdnL. SdnL would be responsible for the introduction of an alpha-methyl group of the polyketide chain. Alternatively, the beta-lactamase-like protein sdnR might be responsible for the cleavage and transfer of the polyketide chain from the PKS sdnO to sordarin. Two putative cytochrome P450 monooxygenases, sdnQ and sdnT, might catalyze the epoxidations of the polyketide chain to complete the biosynthesis of hypoxysordarin. Transcriptional regulators sdnM and sdnS are presumably encoded for the transcriptional regulation of the expression of the sdn gene cluster. The sequence is that of Short-chain dehydrogenase sdnK from Sordaria araneosa (Pleurage araneosa).